The following is a 283-amino-acid chain: uncharacterized protein (283 aa).

Basic and acidic residues predominate over residues 208-232 (SMENKVNETQNSKEDEKKKNDGDGK). The disordered stretch occupies residues 208 to 237 (SMENKVNETQNSKEDEKKKNDGDGKRSKKK).

This is an uncharacterized protein from Saccharomyces cerevisiae (strain ATCC 204508 / S288c) (Baker's yeast).